A 190-amino-acid chain; its full sequence is Large ribosomal subunit protein uL10 (190 aa).

This sequence belongs to the universal ribosomal protein uL10 family. As to quaternary structure, part of the ribosomal stalk of the 50S ribosomal subunit. The N-terminus interacts with L11 and the large rRNA to form the base of the stalk. The C-terminus forms an elongated spine to which L12 dimers bind in a sequential fashion forming a multimeric L10(L12)X complex.

Forms part of the ribosomal stalk, playing a central role in the interaction of the ribosome with GTP-bound translation factors. This Trichodesmium erythraeum (strain IMS101) protein is Large ribosomal subunit protein uL10.